Here is a 95-residue protein sequence, read N- to C-terminus: Citrate lyase acyl carrier protein (95 aa).

Ser14 bears the O-(phosphoribosyl dephospho-coenzyme A)serine mark.

The protein belongs to the CitD family. In terms of assembly, oligomer with a subunit composition of (alpha,beta,gamma)6.

It is found in the cytoplasm. Its function is as follows. Covalent carrier of the coenzyme of citrate lyase. This Haemophilus influenzae (strain PittEE) protein is Citrate lyase acyl carrier protein.